Reading from the N-terminus, the 509-residue chain is Phosphoprotein (509 aa).

Disordered stretches follow at residues 33 to 84 (LESW…LGFR), 131 to 236 (VQAN…DGNS), and 256 to 281 (PESR…SAKT). Over residues 44-65 (GRATPNPDTSEGDHQNINQSCS) the composition is skewed to polar residues. Positions 146–157 (DGSDDSDVDSGP) are enriched in acidic residues. Ser-151 bears the Phosphoserine mark. Residues 178–187 (RSTDVEKLEG) show a composition bias toward basic and acidic residues. The span at 221 to 236 (SRPSAQSIKKGTDGNS) shows a compositional bias: polar residues. Positions 303–376 (SEFEYEDDLF…LSSIMIAIPG (74 aa)) are multimerization. The interval 459–509 (SSRSVIRSIIKSSKLNIDHKDYLLDLLNDVKGSKDLKEFHKMLTAILAKQP) is interaction with the nucleocapsid (N-RNA).

Belongs to the morbillivirus P protein family. As to quaternary structure, homotetramer. Interacts (via multimerization domain) with polymerase L; this interaction forms the polymerase L-P complex. Interacts (via N-terminus) with N0 (via Ncore); this interaction allows P to chaperon N0 to avoid N polymerization before encapsidation. Interacts (via C-terminus) with N-RNA template; this interaction positions the polymerase on the template for both transcription and replication. Interacts with host ISG15; this interaction disrupts the activity of the N0-P complex. Phosphorylation on serines by host CK2 is necessary for the formation of viral factories.

Essential cofactor of the RNA polymerase L that plays a central role in the transcription and replication by forming the polymerase complex with RNA polymerase L and recruiting L to the genomic N-RNA template for RNA synthesis. Also plays a central role in the encapsidation of nascent RNA chains by forming the encapsidation complex with the nucleocapsid protein N (N-P complex). Acts as a chaperone for newly synthesized free N protein, so-called N0, allowing encapsidation of nascent RNA chains during replication. The nucleoprotein protein N prevents excessive phosphorylation of P, which leads to down-regulation of viral transcription/ replication. Participates, together with N, in the formation of viral factories (viroplasms), which are large inclusions in the host cytoplasm where replication takes place. This is Phosphoprotein (P/V) from Capra hircus (Goat).